We begin with the raw amino-acid sequence, 44 residues long: Cytochrome b559 subunit beta (44 aa).

The helical transmembrane segment at Trp19–Ala35 threads the bilayer. His23 serves as a coordination point for heme.

This sequence belongs to the PsbE/PsbF family. In terms of assembly, heterodimer of an alpha subunit and a beta subunit. PSII is composed of 1 copy each of membrane proteins PsbA, PsbB, PsbC, PsbD, PsbE, PsbF, PsbH, PsbI, PsbJ, PsbK, PsbL, PsbM, PsbT, PsbX, PsbY, PsbZ, Psb30/Ycf12, peripheral proteins PsbO, CyanoQ (PsbQ), PsbU, PsbV and a large number of cofactors. It forms dimeric complexes. Heme b is required as a cofactor.

It is found in the cellular thylakoid membrane. Functionally, this b-type cytochrome is tightly associated with the reaction center of photosystem II (PSII). PSII is a light-driven water:plastoquinone oxidoreductase that uses light energy to abstract electrons from H(2)O, generating O(2) and a proton gradient subsequently used for ATP formation. It consists of a core antenna complex that captures photons, and an electron transfer chain that converts photonic excitation into a charge separation. This Crocosphaera subtropica (strain ATCC 51142 / BH68) (Cyanothece sp. (strain ATCC 51142)) protein is Cytochrome b559 subunit beta.